The primary structure comprises 451 residues: Phosphoglucosamine mutase (451 aa).

Serine 102 serves as the catalytic Phosphoserine intermediate. Residues serine 102, aspartate 242, aspartate 244, and aspartate 246 each contribute to the Mg(2+) site. At serine 102 the chain carries Phosphoserine.

The protein belongs to the phosphohexose mutase family. Requires Mg(2+) as cofactor. Post-translationally, activated by phosphorylation.

The catalysed reaction is alpha-D-glucosamine 1-phosphate = D-glucosamine 6-phosphate. In terms of biological role, catalyzes the conversion of glucosamine-6-phosphate to glucosamine-1-phosphate. The sequence is that of Phosphoglucosamine mutase from Staphylococcus aureus (strain USA300).